A 129-amino-acid polypeptide reads, in one-letter code: Phosphoribosyl-AMP cyclohydrolase (129 aa).

D76 lines the Mg(2+) pocket. C77 is a binding site for Zn(2+). 2 residues coordinate Mg(2+): D78 and D80. Zn(2+)-binding residues include C97 and C104.

The protein belongs to the PRA-CH family. Homodimer. Requires Mg(2+) as cofactor. Zn(2+) is required as a cofactor.

It is found in the cytoplasm. It carries out the reaction 1-(5-phospho-beta-D-ribosyl)-5'-AMP + H2O = 1-(5-phospho-beta-D-ribosyl)-5-[(5-phospho-beta-D-ribosylamino)methylideneamino]imidazole-4-carboxamide. The protein operates within amino-acid biosynthesis; L-histidine biosynthesis; L-histidine from 5-phospho-alpha-D-ribose 1-diphosphate: step 3/9. Functionally, catalyzes the hydrolysis of the adenine ring of phosphoribosyl-AMP. In Albidiferax ferrireducens (strain ATCC BAA-621 / DSM 15236 / T118) (Rhodoferax ferrireducens), this protein is Phosphoribosyl-AMP cyclohydrolase.